We begin with the raw amino-acid sequence, 175 residues long: MKSTDRILAHKYSIALSSLADKKDLPSLLAELKEIHLAIGNSSFFYSPAVPKKEKKQALSSALKTDNFLIKNTLFLLIDNKKLNLLGQIIIDLNKTIESFTNTVSAEVYCAREMDDKQQNAVIESLKKYFKANFINADFKQDKTLISGLKIKTADYVIDGSTKNNLQKLKQVLQD.

It belongs to the ATPase delta chain family. As to quaternary structure, F-type ATPases have 2 components, F(1) - the catalytic core - and F(0) - the membrane proton channel. F(1) has five subunits: alpha(3), beta(3), gamma(1), delta(1), epsilon(1). F(0) has three main subunits: a(1), b(2) and c(10-14). The alpha and beta chains form an alternating ring which encloses part of the gamma chain. F(1) is attached to F(0) by a central stalk formed by the gamma and epsilon chains, while a peripheral stalk is formed by the delta and b chains.

Its subcellular location is the cell membrane. Functionally, f(1)F(0) ATP synthase produces ATP from ADP in the presence of a proton or sodium gradient. F-type ATPases consist of two structural domains, F(1) containing the extramembraneous catalytic core and F(0) containing the membrane proton channel, linked together by a central stalk and a peripheral stalk. During catalysis, ATP synthesis in the catalytic domain of F(1) is coupled via a rotary mechanism of the central stalk subunits to proton translocation. This protein is part of the stalk that links CF(0) to CF(1). It either transmits conformational changes from CF(0) to CF(1) or is implicated in proton conduction. The sequence is that of ATP synthase subunit delta from Elusimicrobium minutum (strain Pei191).